A 182-amino-acid chain; its full sequence is METTVKIKKSVLKRQKIAAAKEAAAKGAVKAHLNNVPTSTRKMRLVADLVRGQRVTLALGILKYQAKQGARKLEKLVLGSVADWQAKNSEARVEDADLYIREIFVDGGRVLKRLRTAPQGRAYRVRKRSNHITIVIDSLKELPAAPVAVVEEKEVVATAAAKPKATAKKATGEKSKAKTKAN.

Residues 159–182 form a disordered region; that stretch reads AAAKPKATAKKATGEKSKAKTKAN.

Belongs to the universal ribosomal protein uL22 family. In terms of assembly, part of the 50S ribosomal subunit.

Its function is as follows. This protein binds specifically to 23S rRNA; its binding is stimulated by other ribosomal proteins, e.g. L4, L17, and L20. It is important during the early stages of 50S assembly. It makes multiple contacts with different domains of the 23S rRNA in the assembled 50S subunit and ribosome. In terms of biological role, the globular domain of the protein is located near the polypeptide exit tunnel on the outside of the subunit, while an extended beta-hairpin is found that lines the wall of the exit tunnel in the center of the 70S ribosome. The polypeptide is Large ribosomal subunit protein uL22 (Cytophaga hutchinsonii (strain ATCC 33406 / DSM 1761 / CIP 103989 / NBRC 15051 / NCIMB 9469 / D465)).